We begin with the raw amino-acid sequence, 331 residues long: MKELLNRLISHETISTDEAKQVIFNISEGKYNDTQIAAFLTVYMMRSITIEELEGFRDALLELCIKVDLSAYNAVDLCGTGGDGKDTFNVSTTSSFVTAGAGVKVAKHGNYGVSSVSGSSNVMEYLGIKFSSDAGFLEKCIDQANICILHAPLFHPAMKNVGPVRKSLAVKTFFNMLGPMVNPAFPKNQLVGVFSLELARMYAYLYQNTDKNYTILHSLDGYDEISLTGETKSISNNSERILKASDFGVSELKQTEIAGGGSVESSAEILTNILKGKGSQAQNNVVCANAGMAIATSRNMSPHEGFAEAKESLESGKAFDSFKKLQKLSQN.

5-phospho-alpha-D-ribose 1-diphosphate-binding positions include Gly-79, 82-83 (GD), Thr-87, 89-92 (NVST), 107-115 (KHGNYGVSS), and Ser-119. Position 79 (Gly-79) interacts with anthranilate. A Mg(2+)-binding site is contributed by Ser-91. Asn-110 contacts anthranilate. Anthranilate is bound at residue Arg-165. Asp-223 and Glu-224 together coordinate Mg(2+).

It belongs to the anthranilate phosphoribosyltransferase family. In terms of assembly, homodimer. Mg(2+) serves as cofactor.

The enzyme catalyses N-(5-phospho-beta-D-ribosyl)anthranilate + diphosphate = 5-phospho-alpha-D-ribose 1-diphosphate + anthranilate. The protein operates within amino-acid biosynthesis; L-tryptophan biosynthesis; L-tryptophan from chorismate: step 2/5. Its function is as follows. Catalyzes the transfer of the phosphoribosyl group of 5-phosphorylribose-1-pyrophosphate (PRPP) to anthranilate to yield N-(5'-phosphoribosyl)-anthranilate (PRA). The sequence is that of Anthranilate phosphoribosyltransferase from Christiangramia forsetii (strain DSM 17595 / CGMCC 1.15422 / KT0803) (Gramella forsetii).